The following is a 165-amino-acid chain: Phosphopantetheine adenylyltransferase (165 aa).

Ser10 is a binding site for substrate. ATP is bound by residues 10–11 (SF) and His18. Lys42, Thr79, and Arg93 together coordinate substrate. ATP contacts are provided by residues 94 to 96 (GLR), Glu104, and 129 to 135 (VRPITAT).

It belongs to the bacterial CoaD family. Homohexamer. Requires Mg(2+) as cofactor.

The protein localises to the cytoplasm. It carries out the reaction (R)-4'-phosphopantetheine + ATP + H(+) = 3'-dephospho-CoA + diphosphate. It participates in cofactor biosynthesis; coenzyme A biosynthesis; CoA from (R)-pantothenate: step 4/5. In terms of biological role, reversibly transfers an adenylyl group from ATP to 4'-phosphopantetheine, yielding dephospho-CoA (dPCoA) and pyrophosphate. The polypeptide is Phosphopantetheine adenylyltransferase (Afipia carboxidovorans (strain ATCC 49405 / DSM 1227 / KCTC 32145 / OM5) (Oligotropha carboxidovorans)).